A 593-amino-acid chain; its full sequence is Putative auxin response factor 15 (593 aa).

A DNA-binding region (TF-B3) is located at residues 126-228 (FTKVLTASDI…ELRVGIRRAR (103 aa)). Positions 511 to 592 (RTCTKVQMQG…MVKRIYIQKR (82 aa)) constitute a PB1 domain.

This sequence belongs to the ARF family. Homodimers and heterodimers.

It localises to the nucleus. Auxin response factors (ARFs) are transcriptional factors that bind specifically to the DNA sequence 5'-TGTCTC-3' found in the auxin-responsive promoter elements (AuxREs). Could act as transcriptional activator or repressor. Formation of heterodimers with Aux/IAA proteins may alter their ability to modulate early auxin response genes expression. The chain is Putative auxin response factor 15 (ARF15) from Arabidopsis thaliana (Mouse-ear cress).